The primary structure comprises 213 residues: Large ribosomal subunit protein uL3 (213 aa).

At Gln151 the chain carries N5-methylglutamine.

Belongs to the universal ribosomal protein uL3 family. As to quaternary structure, part of the 50S ribosomal subunit. Forms a cluster with proteins L14 and L19. In terms of processing, methylated by PrmB.

One of the primary rRNA binding proteins, it binds directly near the 3'-end of the 23S rRNA, where it nucleates assembly of the 50S subunit. The sequence is that of Large ribosomal subunit protein uL3 from Rhizobium etli (strain ATCC 51251 / DSM 11541 / JCM 21823 / NBRC 15573 / CFN 42).